Reading from the N-terminus, the 556-residue chain is Polyphenol oxidase 2 (556 aa).

Cu cation contacts are provided by His57, His81, His90, His250, His254, and His282. Residues 79 to 81 constitute a cross-link (2'-(S-cysteinyl)-histidine (Cys-His)); the sequence is CTH. His254 provides a ligand contact to substrate. Positions 379–556 are cleaved as a propeptide — removed in mature form; the sequence is SKPSSGARNT…FDDVAVHVIN (178 aa).

Belongs to the tyrosinase family. In terms of assembly, heterotetramer. The cofactor is Cu(2+). In terms of processing, the C-ter is probably cleaved after Gly-378 since the mature active protein is smaller than the protein encoded by the gene.

It catalyses the reaction 2 L-dopa + O2 = 2 L-dopaquinone + 2 H2O. The enzyme catalyses L-tyrosine + O2 = L-dopaquinone + H2O. Its function is as follows. Copper-containing oxidase that catalyzes both the o-hydroxylation of monophenols and the subsequent oxidation of the resulting o-diphenols into reactive o-quinones, which evolve spontaneously to produce intermediates, which associate in dark brown pigments. Involved in the initial step of melanin synthesis. Melanins constitute a mechanism of defense and resistance to stress such as UV radiations, free radicals, gamma rays, dehydratation and extreme temperatures, and contribute to the fungal cell-wall resistance against hydrolytic enzymes in avoiding cellular lysis. Fungal pigments are also involved in the formation and stability of spores. The polypeptide is Polyphenol oxidase 2 (PPO2) (Agaricus bisporus (White button mushroom)).